The sequence spans 243 residues: Orotidine 5'-phosphate decarboxylase (243 aa).

Substrate-binding positions include D16, K38, 65–74 (DLKLHDIPNT), T120, R181, Q190, G210, and R211. Residue K67 is the Proton donor of the active site.

Belongs to the OMP decarboxylase family. Type 1 subfamily. In terms of assembly, homodimer.

The enzyme catalyses orotidine 5'-phosphate + H(+) = UMP + CO2. It functions in the pathway pyrimidine metabolism; UMP biosynthesis via de novo pathway; UMP from orotate: step 2/2. Catalyzes the decarboxylation of orotidine 5'-monophosphate (OMP) to uridine 5'-monophosphate (UMP). The chain is Orotidine 5'-phosphate decarboxylase from Bradyrhizobium sp. (strain BTAi1 / ATCC BAA-1182).